Reading from the N-terminus, the 177-residue chain is Peptide methionine sulfoxide reductase MsrA (177 aa).

The active site involves Cys-15.

The protein belongs to the MsrA Met sulfoxide reductase family.

The enzyme catalyses L-methionyl-[protein] + [thioredoxin]-disulfide + H2O = L-methionyl-(S)-S-oxide-[protein] + [thioredoxin]-dithiol. It catalyses the reaction [thioredoxin]-disulfide + L-methionine + H2O = L-methionine (S)-S-oxide + [thioredoxin]-dithiol. Has an important function as a repair enzyme for proteins that have been inactivated by oxidation. Catalyzes the reversible oxidation-reduction of methionine sulfoxide in proteins to methionine. The protein is Peptide methionine sulfoxide reductase MsrA of Listeria innocua serovar 6a (strain ATCC BAA-680 / CLIP 11262).